Reading from the N-terminus, the 204-residue chain is Recombination protein RecR (204 aa).

The C4-type zinc finger occupies 63–78 (CRRCFNITVGELCAIC). In terms of domain architecture, Toprim spans 86–181 (TKICVVEEPL…RVTRPARGLP (96 aa)).

It belongs to the RecR family.

In terms of biological role, may play a role in DNA repair. It seems to be involved in an RecBC-independent recombinational process of DNA repair. It may act with RecF and RecO. The protein is Recombination protein RecR of Chloroflexus aurantiacus (strain ATCC 29366 / DSM 635 / J-10-fl).